A 98-amino-acid chain; its full sequence is NADH-ubiquinone oxidoreductase chain 4L (98 aa).

Helical transmembrane passes span 1-21 (MSIT…GMFT), 29-49 (SLLC…IVSL), and 61-81 (VILL…LVMV).

It belongs to the complex I subunit 4L family. In terms of assembly, core subunit of respiratory chain NADH dehydrogenase (Complex I) which is composed of 45 different subunits.

The protein localises to the mitochondrion inner membrane. It carries out the reaction a ubiquinone + NADH + 5 H(+)(in) = a ubiquinol + NAD(+) + 4 H(+)(out). In terms of biological role, core subunit of the mitochondrial membrane respiratory chain NADH dehydrogenase (Complex I) which catalyzes electron transfer from NADH through the respiratory chain, using ubiquinone as an electron acceptor. Part of the enzyme membrane arm which is embedded in the lipid bilayer and involved in proton translocation. The chain is NADH-ubiquinone oxidoreductase chain 4L (MT-ND4L) from Ochotona collaris (Collared pika).